The primary structure comprises 370 residues: MTLSRSSRSVDVDGAQPYTITIAPGLLADGARLASHVRGRHALLLSDSQVAPHYAAGVRAALSRARPDLQVGELVIAAGEASKTLETFGSAITALAELGATRDACVFALGGGVVGDLAGFAAACWMRGVDCVQLPTSLLAMVDSSVGGKTAVDIPQGKNLVGAFHPPRAVIADTDTLRTLPARELRAGLAEVIKYGAIRDPLFFQWLHAERRALLDGDAAALAQAIARSCEHKAEIVARDPLEKGERALLNLGHTFGHAIETEQGYGAPGNDNLNHGEAVAVGMVLAARLSAALGMSDVQDTETLRALLHDFDLPTEIPPGLTPQALLARMRLDKKNIAGRLRLVLWRGIGKAEVVPDVEEAAVLEILAG.

Residues 112–116 (GVVGD), 136–137 (TS), lysine 149, lysine 158, and 176–179 (TLRT) each bind NAD(+). Glutamate 191, histidine 254, and histidine 276 together coordinate Zn(2+).

The protein belongs to the sugar phosphate cyclases superfamily. Dehydroquinate synthase family. NAD(+) is required as a cofactor. Co(2+) serves as cofactor. Requires Zn(2+) as cofactor.

The protein resides in the cytoplasm. The catalysed reaction is 7-phospho-2-dehydro-3-deoxy-D-arabino-heptonate = 3-dehydroquinate + phosphate. The protein operates within metabolic intermediate biosynthesis; chorismate biosynthesis; chorismate from D-erythrose 4-phosphate and phosphoenolpyruvate: step 2/7. In terms of biological role, catalyzes the conversion of 3-deoxy-D-arabino-heptulosonate 7-phosphate (DAHP) to dehydroquinate (DHQ). The chain is 3-dehydroquinate synthase from Xanthomonas axonopodis pv. citri (strain 306).